The primary structure comprises 112 residues: MNLFYKMLLFGDPFFRLHKSAPCIRCCDKNAKSAQPDAHVPRTTISFQRLGTSVIYSRFNCTCNTQTYRYRIVYHRINQRGCKTLMFVWHRVTKHYCSGRKGHVHSPRHNND.

This is an uncharacterized protein from Saccharomyces cerevisiae (strain ATCC 204508 / S288c) (Baker's yeast).